Reading from the N-terminus, the 111-residue chain is Small ribosomal subunit protein uS10 (111 aa).

The protein belongs to the universal ribosomal protein uS10 family. In terms of assembly, part of the 30S ribosomal subunit.

Involved in the binding of tRNA to the ribosomes. This is Small ribosomal subunit protein uS10 from Protochlamydia amoebophila (strain UWE25).